Reading from the N-terminus, the 328-residue chain is Gonadotropin-releasing hormone receptor (328 aa).

The Extracellular portion of the chain corresponds to 1–38 (MANRAYLEQKQTQCSIINSSFSMTHRDLPTLTLSGKIR). N18 is a glycosylation site (N-linked (GlcNAc...) asparagine). A helical transmembrane segment spans residues 39 to 58 (VMVTFFLFLVSTAFNASFLM). Topologically, residues 59–77 (KLQRQTQKKEEVKKLTRMK) are cytoplasmic. Residues 78-97 (VLLKHLTLANLLETVIVMPL) form a helical membrane-spanning segment. Residues 98-115 (DGIWNVTVQWYAGEFLCK) lie on the Extracellular side of the membrane. N-linked (GlcNAc...) asparagine glycosylation occurs at N102. C114 and C196 are oxidised to a cystine. Residues 116–137 (ALSYLKLFSMYAPAFMMVVISL) form a helical membrane-spanning segment. Residues 138-164 (DRFLAITRPLAVKSNTKVGQSLIAVAW) are Cytoplasmic-facing. Residues 165–184 (FLSIVLAGPQLYIFRMIYVE) traverse the membrane as a helical segment. Residues 185–212 (DISGQTGNFSQCVTHCSFPEWWQEAFYN) lie on the Extracellular side of the membrane. A glycan (N-linked (GlcNAc...) asparagine) is linked at N192. A helical membrane pass occupies residues 213–232 (LLTFSCLFIGPLLIMLVCNA). Residues 233 to 281 (KIIFTLTQVLHQDPHELQLNRSKNNIPRARLRTLKMTVAFATLFTICWT) are Cytoplasmic-facing. Residues 282-300 (PYYVLGIWYWFDPEMLNRV) traverse the membrane as a helical segment. Residues 301-306 (SDPVNH) are Extracellular-facing. The helical transmembrane segment at 307–326 (FFFLFGLLNPCFDPLIYGYF) threads the bilayer. Topologically, residues 327–328 (SL) are cytoplasmic.

The protein belongs to the G-protein coupled receptor 1 family.

The protein localises to the cell membrane. Its function is as follows. Receptor for gonadotropin releasing hormone (GnRH) that mediates the action of GnRH to stimulate the secretion of the gonadotropic hormones luteinizing hormone (LH) and follicle-stimulating hormone (FSH). This receptor mediates its action by association with G-proteins that activate a phosphatidylinositol-calcium second messenger system. In Trichosurus vulpecula (Brush-tailed possum), this protein is Gonadotropin-releasing hormone receptor (GNRHR).